The sequence spans 167 residues: Translationally-controlled tumor protein homolog (167 aa).

The region spanning 1–167 (MKLFTDIISN…WKDGLRETKI (167 aa)) is the TCTP domain.

This sequence belongs to the TCTP family.

The protein resides in the cytoplasm. It localises to the cytoskeleton. In terms of biological role, involved in protein synthesis. Involved in microtubule stabilization. In Mycosarcoma maydis (Corn smut fungus), this protein is Translationally-controlled tumor protein homolog.